A 477-amino-acid polypeptide reads, in one-letter code: Putative multidrug resistance protein MdtD (477 aa).

Transmembrane regions (helical) follow at residues 13–33, 50–70, 73–93, 107–127, 139–159, 166–186, 196–216, 220–240, 268–288, 291–311, 326–348, 352–374, 394–414, and 432–452; these read LWIV…VNTA, SVIV…GWLA, VGVQ…SILC, VVQG…VMKI, FVTL…GFLV, WIFL…LLLM, FDIS…LALD, GMGL…AALA, LTAS…TPLF, VGMG…IIGS, GYRN…FPLV, GWIW…RFSA, LLSM…GILI, and AFIY…LAFA.

This sequence belongs to the major facilitator superfamily. TCR/Tet family.

The protein resides in the cell inner membrane. This chain is Putative multidrug resistance protein MdtD, found in Serratia proteamaculans (strain 568).